A 483-amino-acid polypeptide reads, in one-letter code: Probable cytosol aminopeptidase (483 aa).

Residues lysine 252 and aspartate 257 each contribute to the Mn(2+) site. Lysine 264 is an active-site residue. The Mn(2+) site is built by aspartate 275, aspartate 334, and glutamate 336. The active site involves arginine 338.

This sequence belongs to the peptidase M17 family. Requires Mn(2+) as cofactor.

The protein resides in the cytoplasm. It catalyses the reaction Release of an N-terminal amino acid, Xaa-|-Yaa-, in which Xaa is preferably Leu, but may be other amino acids including Pro although not Arg or Lys, and Yaa may be Pro. Amino acid amides and methyl esters are also readily hydrolyzed, but rates on arylamides are exceedingly low.. It carries out the reaction Release of an N-terminal amino acid, preferentially leucine, but not glutamic or aspartic acids.. Its function is as follows. Presumably involved in the processing and regular turnover of intracellular proteins. Catalyzes the removal of unsubstituted N-terminal amino acids from various peptides. In Legionella pneumophila (strain Corby), this protein is Probable cytosol aminopeptidase.